Reading from the N-terminus, the 122-residue chain is Large ribosomal subunit protein uL14 (122 aa).

This sequence belongs to the universal ribosomal protein uL14 family. In terms of assembly, part of the 50S ribosomal subunit. Forms a cluster with proteins L3 and L19. In the 70S ribosome, L14 and L19 interact and together make contacts with the 16S rRNA in bridges B5 and B8.

In terms of biological role, binds to 23S rRNA. Forms part of two intersubunit bridges in the 70S ribosome. The protein is Large ribosomal subunit protein uL14 of Lactobacillus helveticus (strain DPC 4571).